A 145-amino-acid polypeptide reads, in one-letter code: Catabolic 3-dehydroquinase (145 aa).

Tyr-24 (proton acceptor) is an active-site residue. Residues Asn-77, His-83, and Asp-90 each contribute to the substrate site. Catalysis depends on His-103, which acts as the Proton donor. Substrate is bound by residues Ile-104–Thr-105 and Arg-114.

This sequence belongs to the type-II 3-dehydroquinase family. As to quaternary structure, homododecamer. Adopts a ring-like structure, composed of an arrangement of two hexameric rings stacked on top of one another.

The enzyme catalyses 3-dehydroquinate = 3-dehydroshikimate + H2O. Its pathway is aromatic compound metabolism; 3,4-dihydroxybenzoate biosynthesis; 3,4-dihydroxybenzoate from 3-dehydroquinate: step 1/2. Functionally, is involved in the catabolism of quinate. Allows the utilization of quinate as carbon source via the beta-ketoadipate pathway. The protein is Catabolic 3-dehydroquinase of Clavispora lusitaniae (strain ATCC 42720) (Yeast).